The primary structure comprises 390 residues: tRNA(Met) cytidine acetate ligase (390 aa).

Residues 7 to 20 (ITEY…HIYH), glycine 101, asparagine 152, and arginine 177 each bind ATP.

This sequence belongs to the TmcAL family.

It is found in the cytoplasm. The enzyme catalyses cytidine(34) in elongator tRNA(Met) + acetate + ATP = N(4)-acetylcytidine(34) in elongator tRNA(Met) + AMP + diphosphate. Functionally, catalyzes the formation of N(4)-acetylcytidine (ac(4)C) at the wobble position of elongator tRNA(Met), using acetate and ATP as substrates. First activates an acetate ion to form acetyladenylate (Ac-AMP) and then transfers the acetyl group to tRNA to form ac(4)C34. This Leuconostoc mesenteroides subsp. mesenteroides (strain ATCC 8293 / DSM 20343 / BCRC 11652 / CCM 1803 / JCM 6124 / NCDO 523 / NBRC 100496 / NCIMB 8023 / NCTC 12954 / NRRL B-1118 / 37Y) protein is tRNA(Met) cytidine acetate ligase.